A 170-amino-acid chain; its full sequence is uncharacterized protein (170 aa).

Transmembrane regions (helical) follow at residues 6–26 (PFYFYIGMALILASIVSILLI), 31–51 (LLFILLAFGSLVGITLILIYI), and 91–111 (IYFSGTFYNSAVLFFIFIVAF).

It to M.jannaschii MJ1249.1, MJ0210.1 and MJ0785.1.

It is found in the cell membrane. This is an uncharacterized protein from Methanocaldococcus jannaschii (strain ATCC 43067 / DSM 2661 / JAL-1 / JCM 10045 / NBRC 100440) (Methanococcus jannaschii).